The following is a 332-amino-acid chain: MSSLKVSQQDKKWVNSGSVAILAYCASSILMTITNKVVMSDRTFNMNFLLLFIQSLVCVITLLVLKVLGSVNFRSFNKTDARNWFPISICLVLMIFTSSKSLQYLSVPVYTIFKNLTIIVIAYGEVLFFGSSVGNMELGSFALMIVSSLIAAHGDYLHSVERLKKMLGPNVSFSFIVNIGYFWIAANCFASALFVLLMRKRIQVTNFKDFDTMFYNNVLSLPLLLLGSYLFEDWSQENLLPHVDIDNLSTMIISGLASVAISYCSGWCVRVTSSTTYSMVGALNKLPIALTGFLFNDAARNLSSAASILLGFASGIIYAVAKQKKLQNSEKI.

The Cytoplasmic portion of the chain corresponds to 1–12 (MSSLKVSQQDKK). Residues 13–33 (WVNSGSVAILAYCASSILMTI) form a helical membrane-spanning segment. At 34–47 (TNKVVMSDRTFNMN) the chain is on the lumenal side. The helical transmembrane segment at 48-68 (FLLLFIQSLVCVITLLVLKVL) threads the bilayer. The Cytoplasmic segment spans residues 69–84 (GSVNFRSFNKTDARNW). A helical membrane pass occupies residues 85 to 105 (FPISICLVLMIFTSSKSLQYL). Over 106-108 (SVP) the chain is Lumenal. Residues 109 to 129 (VYTIFKNLTIIVIAYGEVLFF) form a helical membrane-spanning segment. Over 130-131 (GS) the chain is Cytoplasmic. A helical transmembrane segment spans residues 132–152 (SVGNMELGSFALMIVSSLIAA). Residues 153 to 174 (HGDYLHSVERLKKMLGPNVSFS) are Lumenal-facing. N-linked (GlcNAc...) asparagine glycosylation occurs at N170. Residues 175–195 (FIVNIGYFWIAANCFASALFV) traverse the membrane as a helical segment. Residues 196–211 (LLMRKRIQVTNFKDFD) lie on the Cytoplasmic side of the membrane. The chain crosses the membrane as a helical span at residues 212–232 (TMFYNNVLSLPLLLLGSYLFE). At 233–248 (DWSQENLLPHVDIDNL) the chain is on the lumenal side. N-linked (GlcNAc...) asparagine glycosylation occurs at N247. The chain crosses the membrane as a helical span at residues 249 to 269 (STMIISGLASVAISYCSGWCV). At 270–274 (RVTSS) the chain is on the cytoplasmic side. Residues 275-295 (TTYSMVGALNKLPIALTGFLF) traverse the membrane as a helical segment. Residues 296–300 (NDAAR) are Lumenal-facing. The helical transmembrane segment at 301–321 (NLSSAASILLGFASGIIYAVA) threads the bilayer. The Cytoplasmic segment spans residues 322-332 (KQKKLQNSEKI).

Belongs to the TPT transporter family. SLC35D subfamily. As to quaternary structure, homooligomer.

It is found in the golgi apparatus membrane. The protein resides in the cytoplasmic vesicle membrane. The protein localises to the endoplasmic reticulum membrane. Functionally, involved in the import of GDP-mannose from the cytoplasm into the Golgi lumen. The chain is GDP-mannose transporter 2 (VRG4-2) from Vanderwaltozyma polyspora (strain ATCC 22028 / DSM 70294 / BCRC 21397 / CBS 2163 / NBRC 10782 / NRRL Y-8283 / UCD 57-17) (Kluyveromyces polysporus).